We begin with the raw amino-acid sequence, 1342 residues long: DNA-directed RNA polymerase subunit beta (1342 aa).

This sequence belongs to the RNA polymerase beta chain family. As to quaternary structure, the RNAP catalytic core consists of 2 alpha, 1 beta, 1 beta' and 1 omega subunit. When a sigma factor is associated with the core the holoenzyme is formed, which can initiate transcription.

The catalysed reaction is RNA(n) + a ribonucleoside 5'-triphosphate = RNA(n+1) + diphosphate. Functionally, DNA-dependent RNA polymerase catalyzes the transcription of DNA into RNA using the four ribonucleoside triphosphates as substrates. The chain is DNA-directed RNA polymerase subunit beta from Pectobacterium atrosepticum (strain SCRI 1043 / ATCC BAA-672) (Erwinia carotovora subsp. atroseptica).